A 111-amino-acid polypeptide reads, in one-letter code: Putative ciliary rootlet coiled-coil protein-like 1 protein (111 aa).

The stretch at Met21–Ala86 forms a coiled coil.

Belongs to the rootletin family.

The chain is Putative ciliary rootlet coiled-coil protein-like 1 protein (CROCCP2) from Homo sapiens (Human).